A 465-amino-acid chain; its full sequence is Cysteine--tRNA ligase (465 aa).

A Zn(2+)-binding site is contributed by Cys-30. A 'HIGH' region motif is present at residues 32 to 42 (MTVYDYCHVGH). Zn(2+) contacts are provided by Cys-214, His-239, and Glu-243. Residues 271 to 275 (KMSKS) carry the 'KMSKS' region motif. Lys-274 serves as a coordination point for ATP.

The protein belongs to the class-I aminoacyl-tRNA synthetase family. As to quaternary structure, monomer. The cofactor is Zn(2+).

It localises to the cytoplasm. The enzyme catalyses tRNA(Cys) + L-cysteine + ATP = L-cysteinyl-tRNA(Cys) + AMP + diphosphate. This chain is Cysteine--tRNA ligase, found in Paraburkholderia xenovorans (strain LB400).